The chain runs to 131 residues: uncharacterized protein (131 aa).

This is an uncharacterized protein from Caenorhabditis elegans.